A 184-amino-acid chain; its full sequence is Ribosome-recycling factor (184 aa).

The interval 133-153 is disordered; it reads DSNDELKKQQKNSDITEDDLR.

It belongs to the RRF family.

Its subcellular location is the cytoplasm. In terms of biological role, responsible for the release of ribosomes from messenger RNA at the termination of protein biosynthesis. May increase the efficiency of translation by recycling ribosomes from one round of translation to another. This chain is Ribosome-recycling factor, found in Staphylococcus saprophyticus subsp. saprophyticus (strain ATCC 15305 / DSM 20229 / NCIMB 8711 / NCTC 7292 / S-41).